The chain runs to 350 residues: Spermidine/putrescine import ATP-binding protein PotA (350 aa).

An ABC transporter domain is found at 6–236 (LELRNISKQY…PENLWTAQFI (231 aa)). An ATP-binding site is contributed by 38–45 (GPSGCGKT).

The protein belongs to the ABC transporter superfamily. Spermidine/putrescine importer (TC 3.A.1.11.1) family. The complex is composed of two ATP-binding proteins (PotA), two transmembrane proteins (PotB and PotC) and a solute-binding protein (PotD).

It localises to the cell membrane. It carries out the reaction ATP + H2O + polyamine-[polyamine-binding protein]Side 1 = ADP + phosphate + polyamineSide 2 + [polyamine-binding protein]Side 1.. Its function is as follows. Part of the ABC transporter complex PotABCD involved in spermidine/putrescine import. Responsible for energy coupling to the transport system. In Spiroplasma citri, this protein is Spermidine/putrescine import ATP-binding protein PotA.